The chain runs to 170 residues: Ribosome maturation factor RimM (170 aa).

One can recognise a PRC barrel domain in the interval glutamate 95 to methionine 168.

Belongs to the RimM family. As to quaternary structure, binds ribosomal protein uS19.

The protein localises to the cytoplasm. Its function is as follows. An accessory protein needed during the final step in the assembly of 30S ribosomal subunit, possibly for assembly of the head region. Essential for efficient processing of 16S rRNA. May be needed both before and after RbfA during the maturation of 16S rRNA. It has affinity for free ribosomal 30S subunits but not for 70S ribosomes. The protein is Ribosome maturation factor RimM of Oceanobacillus iheyensis (strain DSM 14371 / CIP 107618 / JCM 11309 / KCTC 3954 / HTE831).